Consider the following 242-residue polypeptide: Glutamate transport ATP-binding protein GluA (242 aa).

Residues 2 to 236 enclose the ABC transporter domain; the sequence is IKMTGVQKFF…PQTDRAKDFL (235 aa). Residue 34–41 participates in ATP binding; the sequence is GPSGSGKS.

It belongs to the ABC transporter superfamily. The complex is composed of two ATP-binding proteins (GluA), two transmembrane proteins (GluC and GluD) and a solute-binding protein (GluB).

Its subcellular location is the cell membrane. It carries out the reaction a polar amino acid(out) + ATP + H2O = a polar amino acid(in) + ADP + phosphate + H(+). It catalyses the reaction L-glutamate(out) + ATP + H2O = L-glutamate(in) + ADP + phosphate + H(+). Functionally, part of the ABC transporter complex GluABCD involved in glutamate uptake. Probably responsible for energy coupling to the transport system. In Corynebacterium efficiens (strain DSM 44549 / YS-314 / AJ 12310 / JCM 11189 / NBRC 100395), this protein is Glutamate transport ATP-binding protein GluA.